The sequence spans 619 residues: ETS-related transcription factor Elf-1 (619 aa).

Ser110, Ser163, Ser167, and Ser168 each carry phosphoserine. Positions Glu158 to Lys199 are disordered. Positions Lys173–Pro182 are enriched in basic residues. At Ser187 the chain carries Phosphoserine. Thr190 is subject to Phosphothreonine. Positions Ile208–Lys290 form a DNA-binding region, ETS. The disordered stretch occupies residues Asn300–Glu366. The span at Ser305–Ser321 shows a compositional bias: low complexity. The segment covering Asn322–Pro335 has biased composition (polar residues). The residue at position 432 (Ser432) is a Phosphoserine. The segment at Thr564 to Tyr592 is disordered. Residues Glu568–Glu586 show a composition bias toward basic and acidic residues.

This sequence belongs to the ETS family. As to quaternary structure, binds to the underphosphorylated form of RB. May interact with other transcription factors in order to regulate specific genes. Interacts with RUNX1. As to expression, in fetal tissues, it is highly expressed in heart, lung liver and kidney, and weakly expressed in brain. In adult, it is highly expressed in pancreas, spleen, thymus and peripheral blood leukocytes, expressed at moderate levels in heart, placenta, lung, liver, skeletal muscle, kidney, prostate, ovary, small intestine and colon, and weakly expressed in brain and testis.

It is found in the nucleus. Transcription factor that activates the LYN and BLK promoters. Appears to be required for the T-cell-receptor-mediated trans activation of HIV-2 gene expression. Binds specifically to two purine-rich motifs in the HIV-2 enhancer. This Homo sapiens (Human) protein is ETS-related transcription factor Elf-1 (ELF1).